The sequence spans 147 residues: Protein Turandot Z (147 aa).

The N-terminal stretch at 1–23 (MYFAIRLSFVLAVLICLTGNGSA) is a signal peptide.

Belongs to the Turandot family.

It localises to the secreted. Functionally, a humoral factor that may play a role in stress tolerance. In Drosophila melanogaster (Fruit fly), this protein is Protein Turandot Z.